The sequence spans 855 residues: DNA mismatch repair protein MutS (855 aa).

618-625 (GPNMGGKS) provides a ligand contact to ATP.

The protein belongs to the DNA mismatch repair MutS family.

Functionally, this protein is involved in the repair of mismatches in DNA. It is possible that it carries out the mismatch recognition step. This protein has a weak ATPase activity. This chain is DNA mismatch repair protein MutS, found in Shewanella loihica (strain ATCC BAA-1088 / PV-4).